Reading from the N-terminus, the 2549-residue chain is Serine/threonine-protein kinase mTOR (2549 aa).

M1 carries the post-translational modification N-acetylmethionine. Residues M1–V651 are interaction with NBN. 32 HEAT repeats span residues S16–R53, M55–G99, N100–G137, D138–V179, P180–T220, Q222–S276, M277–I313, T314–D364, L365–D409, T410–R445, S446–G494, P495–P529, Q530–H563, Q564–G596, H597–L636, I637–F683, H686–A724, M727–R766, R769–L811, R814–Y853, P857–A893, L894–P942, L943–Q988, F989–I1027, P1029–K1068, L1069–A1105, N1106–E1144, S1145–Y1188, Q1189–E1225, E1226–R1273, R1274–N1311, and P1312–L1345. Phosphoserine is present on S567. T1162 carries the post-translational modification Phosphothreonine. Position 1218 is an N6-acetyllysine (K1218). S1261 is modified (phosphoserine). TPR repeat units follow at residues T1346 to L1382, L1383 to P1408, T1409 to E1442, L1443 to D1473, P1474 to E1507, T1508 to H1541, D1542 to E1574, L1575 to I1614, I1615 to D1649, M1650 to H1693, P1694 to A1731, I1732 to W1786, Y1787 to G1846, N1898 to I1930, Q1931 to Q1970, and A1971 to L2005. The 601-residue stretch at L1382–S1982 folds into the FAT domain. The 1D-myo-inositol hexakisphosphate site is built by K1662, K1702, and R1749. Over residues I1825–P1860 the composition is skewed to low complexity. Residues I1825–K1867 form a disordered region. Residues V2012–Y2144 form a sufficient for interaction with the FKBP1A/rapamycin complex region. A Glycyl lysine isopeptide (Lys-Gly) (interchain with G-Cter in ubiquitin) cross-link involves residue K2066. Residues I2156 to K2469 form the PI3K/PI4K catalytic domain. The residue at position 2159 (S2159) is a Phosphoserine; by TBK1. The segment at V2162–R2168 is G-loop. Phosphothreonine is present on T2164. Residues S2165 and Q2167 each contribute to the ATP site. A Phosphothreonine; by PKB/AKT1 modification is found at T2173. ATP-binding residues include L2185, K2187, E2190, Y2225, G2238, W2239, V2240, and T2245. The interval K2258 to G2296 is interaction with MLST8. A catalytic loop region spans residues G2335–N2343. A Mg(2+)-binding site is contributed by N2343. Residues M2345 and I2356 each contribute to the ATP site. The interval H2355 to T2380 is activation loop. D2357 is a binding site for Mg(2+). T2446 is subject to Phosphothreonine; by RPS6KB1. The residue at position 2448 (S2448) is a Phosphoserine; by RPS6KB1. Phosphoserine is present on residues S2478 and S2481. In terms of domain architecture, FATC spans D2517 to W2549.

Belongs to the PI3/PI4-kinase family. As to quaternary structure, part of the mechanistic target of rapamycin complex 1 (mTORC1) which contains MTOR, MLST8 and RPTOR. The mTORC1 complex is a 1 Md obligate dimer of two stoichiometric heterotetramers with overall dimensions of 290 A x 210 A x 135 A. It has a rhomboid shape and a central cavity, the dimeric interfaces are formed by interlocking interactions between the two MTOR and the two RPTOR subunits. The MLST8 subunit forms distal foot-like protuberances, and contacts only one MTOR within the complex, while the small AKT1S1/PRAS40 localizes to the midsection of the central core, in close proximity to RPTOR. mTORC1 associates with AKT1S1/PRAS40, which inhibits its activity by blocking MTOR substrate-recruitment site. Component of the mechanistic target of rapamycin complex 2 (mTORC2), consisting in two heterotretramers composed of MTOR, MLST8, RICTOR and MAPKAP1/SIN1. Interacts with PLPP7 and PML. Interacts with PRR5 and RICTOR; the interaction is direct within the mTORC2 complex and interaction with RICTOR is enhanced by deubiquitination of RICTOR by USP9X. mTORC1 and mTORC2 associate with DEPTOR, which regulates their activity. Interacts with WAC; WAC positively regulates MTOR activity by promoting the assembly of the TTT complex composed of TELO2, TTI1 and TTI2 and the RUVBL complex composed of RUVBL1 and RUVBL2 into the TTT-RUVBL complex which leads to the dimerization of the mTORC1 complex and its subsequent activation. Interacts with UBQLN1. Interacts with TTI1 and TELO2. Interacts with CLIP1; phosphorylates and regulates CLIP1. Interacts with NBN. Interacts with HTR6. Interacts with BRAT1. Interacts with MEAK7 (via C-terminal domain); the interaction increases upon nutrient stimulation. Interacts with TM4SF5; the interaction is positively regulated by arginine and is negatively regulated by leucine. Interacts with GPR137B. Interacts with NCKAP1L. Interacts with TPCN1 and TPCN2; the interaction is required for TPCN1 and TPCN2 sensitivity to ATP. Interacts with ATP6V1A and with CRYAB, forming a ternary complex. Interacts with SLC38A7; this interaction mediates the recruitment of mTORC1 to the lysosome and its subsequent activation. Interacts with TSPAN8. Autophosphorylates when part of mTORC1 or mTORC2. Phosphorylation at Ser-1261, Ser-2159 and Thr-2164 promotes autophosphorylation. Phosphorylated at Ser-2448 by RPS6KB1. Phosphorylation in the kinase domain modulates the interactions of MTOR with RPTOR and AKT1S1/PRAS40 and leads to increased intrinsic mTORC1 kinase activity. Phosphorylation at Ser-2159 by TBK1 in response to growth factors and pathogen recognition receptors promotes mTORC1 activity. Phosphorylation at Ser-2159 by TBK1 in response to EGF growth factor promotes mTORC2 activity, leading to AKT1 phosphorylation and activation. Phosphorylation at Thr-2173 in the ATP-binding region by AKT1 strongly reduces kinase activity. Post-translationally, ubiquitinated at Lys-2066 by the SCF(FBXO22) complex via 'Lys-27'-linked ubiquitination prevents mTORC1 substrate recruitment.

The protein resides in the lysosome membrane. It is found in the endoplasmic reticulum membrane. Its subcellular location is the golgi apparatus membrane. It localises to the cell membrane. The protein localises to the mitochondrion outer membrane. The protein resides in the cytoplasm. It is found in the nucleus. Its subcellular location is the PML body. It localises to the microsome membrane. The protein localises to the cytoplasmic vesicle. The protein resides in the phagosome. The catalysed reaction is L-seryl-[protein] + ATP = O-phospho-L-seryl-[protein] + ADP + H(+). The enzyme catalyses L-threonyl-[protein] + ATP = O-phospho-L-threonyl-[protein] + ADP + H(+). It carries out the reaction L-tyrosyl-[protein] + ATP = O-phospho-L-tyrosyl-[protein] + ADP + H(+). The mTORC1 complex is activated in response to nutrients, growth factors or amino acids: activation requires relocalization of the mTORC1 complex to lysosomes that is mediated by the Ragulator complex, SLC38A9, and the Rag GTPases RagA/RRAGA, RagB/RRAGB, RagC/RRAGC and RagD/RRAGD. Activation of mTORC1 by growth factors such as insulin involves AKT1-mediated phosphorylation of TSC1-TSC2, which leads to the activation of the RHEB GTPase a potent activator of the protein kinase activity of mTORC1. Insulin-stimulated and amino acid-dependent phosphorylation at Ser-1261 promotes autophosphorylation and the activation of mTORC1. On the other hand, low cellular energy levels can inhibit mTORC1 through activation of PRKAA1 while hypoxia inhibits mTORC1 through a REDD1-dependent mechanism which may also require PRKAA1. The kinase activity of MTOR within the mTORC1 complex is positively regulated by MLST8. The kinase activity of MTOR is inhibited by DEPTOR and AKT1S1. The non-canonical mTORC1 complex is independent of the RHEB GTPase and specifically mediates phosphorylation of MiT/TFE factors TFEB and TFE3 but not other mTORC1 substrates: it is activated by FLCN, which activates Rag GTPases RagC/RRAGC and RagD/RRAGD. MTOR is the target of the immunosuppressive and anti-cancer drug rapamycin which acts in complex with FKBP1A/FKBP12, and specifically inhibits its kinase activity. mTORC2 is also activated by growth factors, but seems to be nutrient-insensitive. mTORC2 associates and is directly activated by ribosomes. mTORC2 may also be regulated by RHEB but in an indirect manner through the PI3K signaling pathway. Functionally, serine/threonine protein kinase which is a central regulator of cellular metabolism, growth and survival in response to hormones, growth factors, nutrients, energy and stress signals. MTOR directly or indirectly regulates the phosphorylation of at least 800 proteins. Functions as part of 2 structurally and functionally distinct signaling complexes mTORC1 and mTORC2 (mTOR complex 1 and 2). In response to nutrients, growth factors or amino acids, mTORC1 is recruited to the lysosome membrane and promotes protein, lipid and nucleotide synthesis by phosphorylating key regulators of mRNA translation and ribosome synthesis. This includes phosphorylation of EIF4EBP1 and release of its inhibition toward the elongation initiation factor 4E (eiF4E). Moreover, phosphorylates and activates RPS6KB1 and RPS6KB2 that promote protein synthesis by modulating the activity of their downstream targets including ribosomal protein S6, eukaryotic translation initiation factor EIF4B, and the inhibitor of translation initiation PDCD4. Stimulates the pyrimidine biosynthesis pathway, both by acute regulation through RPS6KB1-mediated phosphorylation of the biosynthetic enzyme CAD, and delayed regulation, through transcriptional enhancement of the pentose phosphate pathway which produces 5-phosphoribosyl-1-pyrophosphate (PRPP), an allosteric activator of CAD at a later step in synthesis, this function is dependent on the mTORC1 complex. Regulates ribosome synthesis by activating RNA polymerase III-dependent transcription through phosphorylation and inhibition of MAF1 an RNA polymerase III-repressor. Activates dormant ribosomes by mediating phosphorylation of SERBP1, leading to SERBP1 inactivation and reactivation of translation. In parallel to protein synthesis, also regulates lipid synthesis through SREBF1/SREBP1 and LPIN1. To maintain energy homeostasis mTORC1 may also regulate mitochondrial biogenesis through regulation of PPARGC1A. In the same time, mTORC1 inhibits catabolic pathways: negatively regulates autophagy through phosphorylation of ULK1. Under nutrient sufficiency, phosphorylates ULK1 at 'Ser-758', disrupting the interaction with AMPK and preventing activation of ULK1. Also prevents autophagy through phosphorylation of the autophagy inhibitor DAP. Also prevents autophagy by phosphorylating RUBCNL/Pacer under nutrient-rich conditions. Prevents autophagy by mediating phosphorylation of AMBRA1, thereby inhibiting AMBRA1 ability to mediate ubiquitination of ULK1 and interaction between AMBRA1 and PPP2CA. mTORC1 exerts a feedback control on upstream growth factor signaling that includes phosphorylation and activation of GRB10 a INSR-dependent signaling suppressor. Among other potential targets mTORC1 may phosphorylate CLIP1 and regulate microtubules. The mTORC1 complex is inhibited in response to starvation and amino acid depletion. The non-canonical mTORC1 complex, which acts independently of RHEB, specifically mediates phosphorylation of MiT/TFE factors TFEB and TFE3 in the presence of nutrients, promoting their cytosolic retention and inactivation. Upon starvation or lysosomal stress, inhibition of mTORC1 induces dephosphorylation and nuclear translocation of TFEB and TFE3, promoting their transcription factor activity. The mTORC1 complex regulates pyroptosis in macrophages by promoting GSDMD oligomerization. MTOR phosphorylates RPTOR which in turn inhibits mTORC1. As part of the mTORC2 complex, MTOR transduces signals from growth factors to pathways involved in proliferation, cytoskeletal organization, lipogenesis and anabolic output. In response to growth factors, mTORC2 phosphorylates and activates AGC protein kinase family members, including AKT (AKT1, AKT2 and AKT3), PKC (PRKCA, PRKCB and PRKCE) and SGK1. In contrast to mTORC1, mTORC2 is nutrient-insensitive. mTORC2 plays a critical role in AKT1 activation by mediating phosphorylation of different sites depending on the context, such as 'Thr-450', 'Ser-473', 'Ser-477' or 'Thr-479', facilitating the phosphorylation of the activation loop of AKT1 on 'Thr-308' by PDPK1/PDK1 which is a prerequisite for full activation. mTORC2 also regulates the phosphorylation of SGK1 at 'Ser-422'. mTORC2 may regulate the actin cytoskeleton, through phosphorylation of PRKCA, PXN and activation of the Rho-type guanine nucleotide exchange factors RHOA and RAC1A or RAC1B. The mTORC2 complex also phosphorylates various proteins involved in insulin signaling, such as FBXW8 and IGF2BP1. May also regulate insulin signaling by acting as a tyrosine protein kinase that catalyzes phosphorylation of IGF1R and INSR. Regulates osteoclastogenesis by adjusting the expression of CEBPB isoforms. Plays an important regulatory role in the circadian clock function; regulates period length and rhythm amplitude of the suprachiasmatic nucleus (SCN) and liver clocks. This chain is Serine/threonine-protein kinase mTOR, found in Mus musculus (Mouse).